A 442-amino-acid chain; its full sequence is Transcription factor MYCFIDRAFT_198930 (442 aa).

Residues 1–34 (MSTTPMAAPPGADLKPVTSSRGRSSTSDEQKLRS) are disordered. Residues 36 to 63 (CESCAQSKLKCSGDKPACARCAKRGLAC) constitute a DNA-binding region (zn(2)-C6 fungal-type). Residues 74-107 (KPKGYTSTNDNNPSKRREDSHSPAASQWSSTGHL) form a disordered region. Residues 96-107 (PAASQWSSTGHL) show a composition bias toward polar residues.

Its subcellular location is the nucleus. Its function is as follows. Transcription factor that positively regulates the expression of the gene cluster that mediates the biosynthesis of an emodin derivative that may be involved in black Sigatoka disease of banana. The sequence is that of Transcription factor MYCFIDRAFT_198930 from Pseudocercospora fijiensis (strain CIRAD86) (Black leaf streak disease fungus).